The primary structure comprises 362 residues: Cobalt-precorrin-5B C(1)-methyltransferase (362 aa).

The protein belongs to the CbiD family.

It catalyses the reaction Co-precorrin-5B + S-adenosyl-L-methionine = Co-precorrin-6A + S-adenosyl-L-homocysteine. Its pathway is cofactor biosynthesis; adenosylcobalamin biosynthesis; cob(II)yrinate a,c-diamide from sirohydrochlorin (anaerobic route): step 6/10. In terms of biological role, catalyzes the methylation of C-1 in cobalt-precorrin-5B to form cobalt-precorrin-6A. This Geobacter sulfurreducens (strain ATCC 51573 / DSM 12127 / PCA) protein is Cobalt-precorrin-5B C(1)-methyltransferase.